We begin with the raw amino-acid sequence, 196 residues long: Imidazoleglycerol-phosphate dehydratase (196 aa).

It belongs to the imidazoleglycerol-phosphate dehydratase family.

The protein localises to the cytoplasm. The catalysed reaction is D-erythro-1-(imidazol-4-yl)glycerol 3-phosphate = 3-(imidazol-4-yl)-2-oxopropyl phosphate + H2O. It functions in the pathway amino-acid biosynthesis; L-histidine biosynthesis; L-histidine from 5-phospho-alpha-D-ribose 1-diphosphate: step 6/9. In Clostridium botulinum (strain ATCC 19397 / Type A), this protein is Imidazoleglycerol-phosphate dehydratase.